A 150-amino-acid polypeptide reads, in one-letter code: Lipoprotein signal peptidase (150 aa).

2 helical membrane-spanning segments follow: residues 59–79 (VFVGVTVLVAIIILAAYRYLP) and 84–101 (LLRLSLALMLGGALGNLI). Residues aspartate 111 and aspartate 125 contribute to the active site. The chain crosses the membrane as a helical span at residues 117-137 (IWPVFNLADMAIVFGVIILCW).

Belongs to the peptidase A8 family.

It localises to the cell membrane. The enzyme catalyses Release of signal peptides from bacterial membrane prolipoproteins. Hydrolyzes -Xaa-Yaa-Zaa-|-(S,diacylglyceryl)Cys-, in which Xaa is hydrophobic (preferably Leu), and Yaa (Ala or Ser) and Zaa (Gly or Ala) have small, neutral side chains.. It functions in the pathway protein modification; lipoprotein biosynthesis (signal peptide cleavage). This protein specifically catalyzes the removal of signal peptides from prolipoproteins. This Moorella thermoacetica (strain ATCC 39073 / JCM 9320) protein is Lipoprotein signal peptidase.